The sequence spans 165 residues: Disulfide bond formation protein B (165 aa).

Over 1-10 the chain is Cytoplasmic; the sequence is MPAWLTNRTI. The chain crosses the membrane as a helical span at residues 11–27; it reads YFLCFLAIAGLMGFAFY. The Periplasmic portion of the chain corresponds to 28–45; sequence LQYVKDLEPCPLCMAQRI. C37 and C40 are disulfide-bonded. The chain crosses the membrane as a helical span at residues 46-62; the sequence is AFVLAGLVFLAAALHNP. Over 63–68 the chain is Cytoplasmic; it reads KNTGTT. Residues 69 to 86 form a helical membrane-spanning segment; it reads VYAFLGWVTTLGGAALAT. Over 87–143 the chain is Periplasmic; it reads RQLWLQSLPADQVPACGPGLEYMLEAFPFSEVLTMMLTGTGECAEVQWTFLGLSIPG. Cysteines 102 and 129 form a disulfide. A helical transmembrane segment spans residues 144-162; sequence WTLVAFIGFTAVWAFAWVR. Residues 163–165 lie on the Cytoplasmic side of the membrane; sequence RPR.

Belongs to the DsbB family.

The protein localises to the cell inner membrane. Required for disulfide bond formation in some periplasmic proteins. Acts by oxidizing the DsbA protein. This chain is Disulfide bond formation protein B, found in Hahella chejuensis (strain KCTC 2396).